Reading from the N-terminus, the 409-residue chain is Iron(III) salmochelin esterase (409 aa).

Belongs to the Fes family.

It is found in the cytoplasm. The catalysed reaction is Fe(III)-C-5-deoxy-beta-D-glucosyl-enterobactin + H2O = Fe(III)-{di[N-(2,3-dihydroxybenzoyl)-L-seryl]-N-(C-5-[deoxy-beta-D-glucosyl]-2,3-dihydroxybenzoyl)-L-serine} + H(+). The enzyme catalyses Fe(III)-{di[N-(2,3-dihydroxybenzoyl)-L-seryl]-N-(C-5-[deoxy-beta-D-glucosyl]-2,3-dihydroxybenzoyl)-L-serine} + H2O + H(+) = Fe(III)-{N-(2,3-dihydroxybenzoyl)-L-seryl-N-(C-5-[deoxy-beta-D-glucosyl]-2,3-dihydroxybenzoyl)-L-serine} + N-(2,3-dihydroxybenzoyl)-L-serine. It catalyses the reaction Fe(III)-{N-(2,3-dihydroxybenzoyl)-L-seryl-[N-(C-5-[deoxy-beta-D-glucosyl]-2,3-dihydroxybenzoyl)-L-serine]2} + H2O + H(+) = Fe(III)-{N-(2,3-dihydroxybenzoyl)-L-seryl-N-(C-5-[deoxy-beta-D-glucosyl]-2,3-dihydroxybenzoyl)-L-serine} + N-(C-5-[deoxy-beta-D-glucosyl]-2,3-dihydroxybenzoyl)-L-serine. It carries out the reaction Fe(III)-di(C-5-deoxy-beta-D-glucosyl)-enterobactin + H2O = Fe(III)-{N-(2,3-dihydroxybenzoyl)-L-seryl-[N-(C-5-[deoxy-beta-D-glucosyl]-2,3-dihydroxybenzoyl)-L-serine]2} + H(+). The catalysed reaction is Fe(III)-{N-(2,3-dihydroxybenzoyl)-L-seryl-[N-(C-5-[deoxy-beta-D-glucosyl]-2,3-dihydroxybenzoyl)-L-serine]2} + H2O + H(+) = Fe(III)-[N-(C-5-[deoxy-beta-D-glucosyl]-2,3-dihydroxybenzoyl)-L-serine]2 + N-(2,3-dihydroxybenzoyl)-L-serine. The enzyme catalyses Fe(III)-[N-(C-5-[deoxy-beta-D-glucosyl]-2,3-dihydroxybenzoyl)-L-serine]2 + H2O + H(+) = Fe(III)-[N-(C-5-[deoxy-beta-D-glucosyl]-2,3-dihydroxybenzoyl)-L-serine] + N-(C-5-[deoxy-beta-D-glucosyl]-2,3-dihydroxybenzoyl)-L-serine. Its function is as follows. Catalyzes the hydrolysis of both the apo and Fe3(+)-bound forms of enterobactin (Ent), monoglucosyl-C-Ent (MGE), diglucosyl-C-Ent (DGE) and triglucosyl-C-Ent (TGE). Shows higher catalytic efficiencies on Fe3(+)-bound forms. The initial linear trimer products are, in turn, very good substrates for further hydrolytic cleavage by IroD, leading to complete degradation of the trilactone to DHB-Ser and/or Glc-DHB-Ser monomers. Hydrolyzes MGE and DGE regioselectively. May be the ferric MGE/DGE esterase responsible for cytoplasmic iron release. This is Iron(III) salmochelin esterase from Escherichia coli O6:H1 (strain CFT073 / ATCC 700928 / UPEC).